Consider the following 431-residue polypeptide: Adenylosuccinate synthetase (431 aa).

Residues 13–19 and 41–43 contribute to the GTP site; these read GDEGKGK and GHT. Aspartate 14 serves as the catalytic Proton acceptor. Residues aspartate 14 and glycine 41 each coordinate Mg(2+). IMP is bound by residues 14–17, 39–42, threonine 130, arginine 144, glutamine 225, threonine 240, and arginine 304; these read DEGK and NAGH. Residue histidine 42 is the Proton donor of the active site. 300–306 contributes to the substrate binding site; it reads ATTGRKR. GTP contacts are provided by residues arginine 306, 332–334, and 415–417; these read KLD and STG.

This sequence belongs to the adenylosuccinate synthetase family. As to quaternary structure, homodimer. The cofactor is Mg(2+).

The protein localises to the cytoplasm. It carries out the reaction IMP + L-aspartate + GTP = N(6)-(1,2-dicarboxyethyl)-AMP + GDP + phosphate + 2 H(+). It participates in purine metabolism; AMP biosynthesis via de novo pathway; AMP from IMP: step 1/2. Plays an important role in the de novo pathway of purine nucleotide biosynthesis. Catalyzes the first committed step in the biosynthesis of AMP from IMP. This Shewanella piezotolerans (strain WP3 / JCM 13877) protein is Adenylosuccinate synthetase.